We begin with the raw amino-acid sequence, 267 residues long: Cell division control protein 11 (267 aa).

Positions 6-263 (QNRRFTIMAA…ENYRAAVLEG (258 aa)) constitute a Septin-type G domain. Residues 16 to 23 (GPRGSGKS) are G1 motif. GTP-binding positions include 16-23 (GPRGSGKS), Gly66, 146-154 (KSDGLSITE), and Arg212. Residues 63-66 (DTPG) form a G3 motif region. The interval 145 to 148 (SKSD) is G4 motif.

It belongs to the TRAFAC class TrmE-Era-EngA-EngB-Septin-like GTPase superfamily. Septin GTPase family. As to quaternary structure, component of the septin complex.

Septins are GTPases involved in cytokinesis. The septins localize to the site of cleavage and act as a structural scaffold that recruits different components involved in diverse processes at specific stages during the cell cycle. Septins are also involved in cell morphogenesis, chitin deposition, cell cycle regulation, cell compartmentalization and spore wall formation. The chain is Cell division control protein 11 (CDC11) from Encephalitozoon cuniculi (strain GB-M1) (Microsporidian parasite).